Reading from the N-terminus, the 209-residue chain is D-aminoacyl-tRNA deacylase 1 (209 aa).

Residues 139–140 (GP) carry the Gly-cisPro motif, important for rejection of L-amino acids motif. The disordered stretch occupies residues 142 to 209 (TIELESPAPG…EGDVSSEREP (68 aa)). Composition is skewed to basic and acidic residues over residues 159 to 170 (QLSKLEKQQQRK) and 181 to 194 (SSKE…EDRS). A phosphoserine mark is found at Ser-197, Ser-204, and Ser-205.

It belongs to the DTD family. In terms of assembly, homodimer. Interacts with CDC45 and TOPBP1. Post-translationally, preferentially phosphorylated in cells arrested early in S phase. Phosphorylation in the C-terminus weakens the interaction with CDC45.

Its subcellular location is the nucleus. It is found in the cytoplasm. The catalysed reaction is glycyl-tRNA(Ala) + H2O = tRNA(Ala) + glycine + H(+). The enzyme catalyses a D-aminoacyl-tRNA + H2O = a tRNA + a D-alpha-amino acid + H(+). An aminoacyl-tRNA editing enzyme that deacylates mischarged D-aminoacyl-tRNAs. Also deacylates mischarged glycyl-tRNA(Ala), protecting cells against glycine mischarging by AlaRS. Acts via tRNA-based rather than protein-based catalysis; rejects L-amino acids rather than detecting D-amino acids in the active site. By recycling D-aminoacyl-tRNA to D-amino acids and free tRNA molecules, this enzyme counteracts the toxicity associated with the formation of D-aminoacyl-tRNA entities in vivo and helps enforce protein L-homochirality. Its function is as follows. ATPase involved in DNA replication, may facilitate loading of CDC45 onto pre-replication complexes. This Mus musculus (Mouse) protein is D-aminoacyl-tRNA deacylase 1 (Dtd1).